Here is a 258-residue protein sequence, read N- to C-terminus: Global transcriptional regulator CodY (258 aa).

The tract at residues 1 to 156 (MSSLLEKTRQ…SATIIGLEIL (156 aa)) is GAF domain. A DNA-binding region (H-T-H motif) is located at residues 204 to 223 (ASKIADKVGITRSVIVNALR).

The protein belongs to the CodY family.

The protein resides in the cytoplasm. Its function is as follows. DNA-binding global transcriptional regulator which is involved in the adaptive response to starvation and acts by directly or indirectly controlling the expression of numerous genes in response to nutrient availability. During rapid exponential growth, CodY is highly active and represses genes whose products allow adaptation to nutrient depletion. In Clostridium tetani (strain Massachusetts / E88), this protein is Global transcriptional regulator CodY.